We begin with the raw amino-acid sequence, 354 residues long: Methylthioribose-1-phosphate isomerase (354 aa).

Substrate is bound by residues 49–51, Arg92, and Gln199; that span reads RGA. The Proton donor role is filled by Asp240. 250–251 lines the substrate pocket; the sequence is NK.

It belongs to the eIF-2B alpha/beta/delta subunits family. MtnA subfamily.

The catalysed reaction is 5-(methylsulfanyl)-alpha-D-ribose 1-phosphate = 5-(methylsulfanyl)-D-ribulose 1-phosphate. It functions in the pathway amino-acid biosynthesis; L-methionine biosynthesis via salvage pathway; L-methionine from S-methyl-5-thio-alpha-D-ribose 1-phosphate: step 1/6. Its function is as follows. Catalyzes the interconversion of methylthioribose-1-phosphate (MTR-1-P) into methylthioribulose-1-phosphate (MTRu-1-P). The polypeptide is Methylthioribose-1-phosphate isomerase (Koribacter versatilis (strain Ellin345)).